A 163-amino-acid chain; its full sequence is MEKRILGLDPGLAILGFGAITCTPGLTQLQSTKVNILDFGVIKTSADIEIGQRLCTLFDDLHTVIDNLQPDVVAIEKLFFYRMSSTIVVAQARGVVMLALAQHHLPYVEFTPAQVKLALTGYGNADKSEVQEAVARELDLAEIPQPDDAADALAVALTAWYQM.

Active-site residues include D9, E76, and D148. 3 residues coordinate Mg(2+): D9, E76, and D148.

This sequence belongs to the RuvC family. As to quaternary structure, homodimer which binds Holliday junction (HJ) DNA. The HJ becomes 2-fold symmetrical on binding to RuvC with unstacked arms; it has a different conformation from HJ DNA in complex with RuvA. In the full resolvosome a probable DNA-RuvA(4)-RuvB(12)-RuvC(2) complex forms which resolves the HJ. Mg(2+) serves as cofactor.

Its subcellular location is the cytoplasm. The catalysed reaction is Endonucleolytic cleavage at a junction such as a reciprocal single-stranded crossover between two homologous DNA duplexes (Holliday junction).. Functionally, the RuvA-RuvB-RuvC complex processes Holliday junction (HJ) DNA during genetic recombination and DNA repair. Endonuclease that resolves HJ intermediates. Cleaves cruciform DNA by making single-stranded nicks across the HJ at symmetrical positions within the homologous arms, yielding a 5'-phosphate and a 3'-hydroxyl group; requires a central core of homology in the junction. The consensus cleavage sequence is 5'-(A/T)TT(C/G)-3'. Cleavage occurs on the 3'-side of the TT dinucleotide at the point of strand exchange. HJ branch migration catalyzed by RuvA-RuvB allows RuvC to scan DNA until it finds its consensus sequence, where it cleaves and resolves the cruciform DNA. In Trichormus variabilis (strain ATCC 29413 / PCC 7937) (Anabaena variabilis), this protein is Crossover junction endodeoxyribonuclease RuvC.